Consider the following 166-residue polypeptide: Phosphopantetheine adenylyltransferase (166 aa).

T10 provides a ligand contact to substrate. ATP contacts are provided by residues 10-11 (TF) and H18. Residues K42, L75, and R89 each contribute to the substrate site. Residues 90–92 (GVR), E100, and 125–131 (YTYVAST) contribute to the ATP site.

Belongs to the bacterial CoaD family. As to quaternary structure, homohexamer. Mg(2+) serves as cofactor.

It is found in the cytoplasm. It catalyses the reaction (R)-4'-phosphopantetheine + ATP + H(+) = 3'-dephospho-CoA + diphosphate. Its pathway is cofactor biosynthesis; coenzyme A biosynthesis; CoA from (R)-pantothenate: step 4/5. Reversibly transfers an adenylyl group from ATP to 4'-phosphopantetheine, yielding dephospho-CoA (dPCoA) and pyrophosphate. This Chlorobaculum parvum (strain DSM 263 / NCIMB 8327) (Chlorobium vibrioforme subsp. thiosulfatophilum) protein is Phosphopantetheine adenylyltransferase.